The chain runs to 316 residues: Phosphatidylinositol mannoside acyltransferase (316 aa).

His-137 serves as the catalytic Proton acceptor. Hexadecanoyl-CoA is bound by residues His-137 and Arg-175. Residue Glu-211 is part of the active site. Hexadecanoyl-CoA is bound at residue Glu-240.

The protein belongs to the LpxL/LpxM/LpxP family.

It is found in the cell inner membrane. It carries out the reaction a 2,6-O-bis(alpha-D-mannopyranosyl)-1-phosphatidyl-1D-myo-inositol + an acyl-CoA = a 2-O-(alpha-D-mannosyl)-6-O-(6-O-acyl-alpha-D-mannosyl)-1-phosphatidyl-1D-myo-inositol + CoA. The enzyme catalyses a 1,2-diacyl-sn-glycero-3-phospho-[alpha-D-mannopyranosyl-(1&lt;-&gt;6)-D-myo-inositol] + an acyl-CoA = a 1,2-diacyl-sn-glycero-3-phospho-[alpha-D-6-acyl-mannopyranosyl-(1&lt;-&gt;6)-D-myo-inositol] + CoA. It functions in the pathway phospholipid metabolism; phosphatidylinositol metabolism. Functionally, catalyzes the transfer of a palmitoyl moiety from palmitoyl-CoA to the 6-position of the mannose ring linked to the 2-position of myo-inositol in phosphatidyl-myo-inositol monomannoside (PIM1) or dimannoside (PIM2). Essential for growth and survival in axenic cultures and during macrophage infection and in a mouse model of infection. The protein is Phosphatidylinositol mannoside acyltransferase of Mycobacterium tuberculosis (strain ATCC 25618 / H37Rv).